The following is a 100-amino-acid chain: Small ribosomal subunit protein uS14c (100 aa).

The protein belongs to the universal ribosomal protein uS14 family. As to quaternary structure, part of the 30S ribosomal subunit.

Its subcellular location is the plastid. The protein localises to the chloroplast. Its function is as follows. Binds 16S rRNA, required for the assembly of 30S particles. The sequence is that of Small ribosomal subunit protein uS14c from Vitis vinifera (Grape).